The following is a 271-amino-acid chain: Putative phosphoenolpyruvate synthase regulatory protein (271 aa).

ADP is bound at residue 152–159 (GASRSGKT).

Belongs to the pyruvate, phosphate/water dikinase regulatory protein family. PSRP subfamily.

The enzyme catalyses [pyruvate, water dikinase] + ADP = [pyruvate, water dikinase]-phosphate + AMP + H(+). It carries out the reaction [pyruvate, water dikinase]-phosphate + phosphate + H(+) = [pyruvate, water dikinase] + diphosphate. Its function is as follows. Bifunctional serine/threonine kinase and phosphorylase involved in the regulation of the phosphoenolpyruvate synthase (PEPS) by catalyzing its phosphorylation/dephosphorylation. In Marinobacter nauticus (strain ATCC 700491 / DSM 11845 / VT8) (Marinobacter aquaeolei), this protein is Putative phosphoenolpyruvate synthase regulatory protein.